Here is a 464-residue protein sequence, read N- to C-terminus: Methionine aminopeptidase 2 (464 aa).

Residues 1–86 form a disordered region; sequence MGSKTPGNHR…RKKKKKNTKE (86 aa). The segment covering 43–54 has biased composition (acidic residues); sequence GESEGGEDEDDD. Over residues 72-83 the composition is skewed to basic residues; it reads KRNKRRKKKKKN. His216 serves as a coordination point for substrate. Residues Asp237, Asp248, and His317 each coordinate a divalent metal cation. His325 is a binding site for substrate. A divalent metal cation-binding residues include Glu350 and Glu445.

This sequence belongs to the peptidase M24A family. Methionine aminopeptidase eukaryotic type 2 subfamily. The cofactor is Co(2+). Requires Zn(2+) as cofactor. Mn(2+) is required as a cofactor. It depends on Fe(2+) as a cofactor.

It localises to the cytoplasm. The catalysed reaction is Release of N-terminal amino acids, preferentially methionine, from peptides and arylamides.. Its function is as follows. Cotranslationally removes the N-terminal methionine from nascent proteins. The N-terminal methionine is often cleaved when the second residue in the primary sequence is small and uncharged (Met-Ala-, Cys, Gly, Pro, Ser, Thr, or Val). This chain is Methionine aminopeptidase 2, found in Ajellomyces capsulatus (strain NAm1 / WU24) (Darling's disease fungus).